Here is a 168-residue protein sequence, read N- to C-terminus: Peptidoglycan-associated lipoprotein (168 aa).

An N-terminal signal peptide occupies residues Met-1–Gly-24. Cys-25 carries N-palmitoyl cysteine lipidation. Residue Cys-25 is the site of S-diacylglycerol cysteine attachment. Positions Gln-51–Gly-167 constitute an OmpA-like domain.

This sequence belongs to the Pal lipoprotein family. In terms of assembly, the Tol-Pal system is composed of five core proteins: the inner membrane proteins TolA, TolQ and TolR, the periplasmic protein TolB and the outer membrane protein Pal. They form a network linking the inner and outer membranes and the peptidoglycan layer. Post-translationally, the N-terminus is blocked.

Its subcellular location is the cell outer membrane. Part of the Tol-Pal system, which plays a role in outer membrane invagination during cell division and is important for maintaining outer membrane integrity. The protein is Peptidoglycan-associated lipoprotein of Brucella abortus biovar 1 (strain 9-941).